A 492-amino-acid chain; its full sequence is Xaa-Pro dipeptidase (492 aa).

A2 carries the N-acetylalanine modification. S167 bears the Phosphoserine mark. Residue H255 participates in a dipeptide binding. Positions 276, 287, and 370 each coordinate Mn(2+). D287 contacts a dipeptide. The a dipeptide site is built by H377 and R398. Mn(2+) is bound by residues E412 and E452.

This sequence belongs to the peptidase M24B family. Eukaryotic-type prolidase subfamily. Homodimer. Requires Mn(2+) as cofactor.

It carries out the reaction Xaa-L-Pro dipeptide + H2O = an L-alpha-amino acid + L-proline. Its function is as follows. Dipeptidase that catalyzes the hydrolysis of dipeptides with a prolyl (Xaa-Pro) or hydroxyprolyl residue in the C-terminal position. The preferred dipeptide substrate is Gly-Pro, but other Xaa-Pro dipeptides, such as Ala-Pro, Met-Pro, Phe-Pro, Val-Pro and Leu-Pro, can be cleaved. Plays an important role in collagen metabolism because the high level of iminoacids in collagen. This Rattus norvegicus (Rat) protein is Xaa-Pro dipeptidase (Pepd).